The chain runs to 120 residues: Aspartate 1-decarboxylase (120 aa).

Ser25 functions as the Schiff-base intermediate with substrate; via pyruvic acid in the catalytic mechanism. Ser25 carries the pyruvic acid (Ser) modification. Residue Thr57 coordinates substrate. Catalysis depends on Tyr58, which acts as the Proton donor. Gly73–Ala75 contacts substrate.

It belongs to the PanD family. As to quaternary structure, heterooctamer of four alpha and four beta subunits. It depends on pyruvate as a cofactor. Post-translationally, is synthesized initially as an inactive proenzyme, which is activated by self-cleavage at a specific serine bond to produce a beta-subunit with a hydroxyl group at its C-terminus and an alpha-subunit with a pyruvoyl group at its N-terminus.

The protein localises to the cytoplasm. It carries out the reaction L-aspartate + H(+) = beta-alanine + CO2. It functions in the pathway cofactor biosynthesis; (R)-pantothenate biosynthesis; beta-alanine from L-aspartate: step 1/1. In terms of biological role, catalyzes the pyruvoyl-dependent decarboxylation of aspartate to produce beta-alanine. This chain is Aspartate 1-decarboxylase, found in Deinococcus deserti (strain DSM 17065 / CIP 109153 / LMG 22923 / VCD115).